Here is a 181-residue protein sequence, read N- to C-terminus: MSRIGKNPVPVPEKVTVSLDGLTVKVKGPKGELERTLPEGVSVSVSQDNNTIVVSPTSTKRISRERHGLSRTLVANMIEGVSNGYSKALEIVGVGSRAQVKGKTLVVSAGYSHPVEMEAPEGITFKVENNTRVIVSGIDKELVGNEAAKVRAIRPPEPYKGKGIKYEGERILRKAGKSGKK.

The protein belongs to the universal ribosomal protein uL6 family. Part of the 50S ribosomal subunit.

Its function is as follows. This protein binds to the 23S rRNA, and is important in its secondary structure. It is located near the subunit interface in the base of the L7/L12 stalk, and near the tRNA binding site of the peptidyltransferase center. The chain is Large ribosomal subunit protein uL6 from Synechococcus sp. (strain CC9605).